Here is a 376-residue protein sequence, read N- to C-terminus: UDP-N-acetylglucosamine--N-acetylmuramyl-(pentapeptide) pyrophosphoryl-undecaprenol N-acetylglucosamine transferase (376 aa).

UDP-N-acetyl-alpha-D-glucosamine is bound by residues 11 to 13, Asn117, Arg160, Ser208, and Gln310; that span reads TGG.

It belongs to the glycosyltransferase 28 family. MurG subfamily.

It is found in the cell inner membrane. The catalysed reaction is di-trans,octa-cis-undecaprenyl diphospho-N-acetyl-alpha-D-muramoyl-L-alanyl-D-glutamyl-meso-2,6-diaminopimeloyl-D-alanyl-D-alanine + UDP-N-acetyl-alpha-D-glucosamine = di-trans,octa-cis-undecaprenyl diphospho-[N-acetyl-alpha-D-glucosaminyl-(1-&gt;4)]-N-acetyl-alpha-D-muramoyl-L-alanyl-D-glutamyl-meso-2,6-diaminopimeloyl-D-alanyl-D-alanine + UDP + H(+). It participates in cell wall biogenesis; peptidoglycan biosynthesis. Cell wall formation. Catalyzes the transfer of a GlcNAc subunit on undecaprenyl-pyrophosphoryl-MurNAc-pentapeptide (lipid intermediate I) to form undecaprenyl-pyrophosphoryl-MurNAc-(pentapeptide)GlcNAc (lipid intermediate II). This Rickettsia conorii (strain ATCC VR-613 / Malish 7) protein is UDP-N-acetylglucosamine--N-acetylmuramyl-(pentapeptide) pyrophosphoryl-undecaprenol N-acetylglucosamine transferase.